The chain runs to 101 residues: Small ribosomal subunit protein uS14 (101 aa).

It belongs to the universal ribosomal protein uS14 family. As to quaternary structure, part of the 30S ribosomal subunit. Contacts proteins S3 and S10.

In terms of biological role, binds 16S rRNA, required for the assembly of 30S particles and may also be responsible for determining the conformation of the 16S rRNA at the A site. In Vesicomyosocius okutanii subsp. Calyptogena okutanii (strain HA), this protein is Small ribosomal subunit protein uS14.